The sequence spans 227 residues: Cytochrome c oxidase subunit 2 (227 aa).

Topologically, residues 1–14 (MAHPMQLGFQDAAS) are mitochondrial intermembrane. A helical membrane pass occupies residues 15-45 (PIMEELLYFHDHTLMIVFMISSLVLYIISLM). The Mitochondrial matrix portion of the chain corresponds to 46 to 59 (LSTELTHTSTMDAQ). The chain crosses the membrane as a helical span at residues 60–87 (EVETVWTILPAVILILIALPSLRILYMM). The Mitochondrial intermembrane segment spans residues 88–227 (DEINTPSMTL…YFEEWLLKSL (140 aa)). 6 residues coordinate Cu cation: histidine 161, cysteine 196, glutamate 198, cysteine 200, histidine 204, and methionine 207. Glutamate 198 contributes to the Mg(2+) binding site. The residue at position 218 (tyrosine 218) is a Phosphotyrosine.

The protein belongs to the cytochrome c oxidase subunit 2 family. In terms of assembly, component of the cytochrome c oxidase (complex IV, CIV), a multisubunit enzyme composed of 14 subunits. The complex is composed of a catalytic core of 3 subunits MT-CO1, MT-CO2 and MT-CO3, encoded in the mitochondrial DNA, and 11 supernumerary subunits COX4I, COX5A, COX5B, COX6A, COX6B, COX6C, COX7A, COX7B, COX7C, COX8 and NDUFA4, which are encoded in the nuclear genome. The complex exists as a monomer or a dimer and forms supercomplexes (SCs) in the inner mitochondrial membrane with NADH-ubiquinone oxidoreductase (complex I, CI) and ubiquinol-cytochrome c oxidoreductase (cytochrome b-c1 complex, complex III, CIII), resulting in different assemblies (supercomplex SCI(1)III(2)IV(1) and megacomplex MCI(2)III(2)IV(2)). Found in a complex with TMEM177, COA6, COX18, COX20, SCO1 and SCO2. Interacts with TMEM177 in a COX20-dependent manner. Interacts with COX20. Interacts with COX16. Cu cation is required as a cofactor.

The protein resides in the mitochondrion inner membrane. The enzyme catalyses 4 Fe(II)-[cytochrome c] + O2 + 8 H(+)(in) = 4 Fe(III)-[cytochrome c] + 2 H2O + 4 H(+)(out). Component of the cytochrome c oxidase, the last enzyme in the mitochondrial electron transport chain which drives oxidative phosphorylation. The respiratory chain contains 3 multisubunit complexes succinate dehydrogenase (complex II, CII), ubiquinol-cytochrome c oxidoreductase (cytochrome b-c1 complex, complex III, CIII) and cytochrome c oxidase (complex IV, CIV), that cooperate to transfer electrons derived from NADH and succinate to molecular oxygen, creating an electrochemical gradient over the inner membrane that drives transmembrane transport and the ATP synthase. Cytochrome c oxidase is the component of the respiratory chain that catalyzes the reduction of oxygen to water. Electrons originating from reduced cytochrome c in the intermembrane space (IMS) are transferred via the dinuclear copper A center (CU(A)) of subunit 2 and heme A of subunit 1 to the active site in subunit 1, a binuclear center (BNC) formed by heme A3 and copper B (CU(B)). The BNC reduces molecular oxygen to 2 water molecules using 4 electrons from cytochrome c in the IMS and 4 protons from the mitochondrial matrix. This chain is Cytochrome c oxidase subunit 2 (MT-CO2), found in Nycticebus coucang (Slow loris).